The primary structure comprises 157 residues: Ubiquitin-like protein 4A (157 aa).

Residues 1–76 enclose the Ubiquitin-like domain; the sequence is MQLTVKALQG…LNLVVKPLEK (76 aa). Lys48 is covalently cross-linked (Glycyl lysine isopeptide (Lys-Gly) (interchain with G-Cter in ubiquitin)). Ser90 carries the post-translational modification Phosphoserine. The interval 96–138 is required and sufficient for interaction with BAG6; that stretch reads WQLISKVLARHFSVADASRVLEQLQRDYDRSLSRLTLDDIERL.

As to quaternary structure, component of the BAG6/BAT3 complex, at least composed of BAG6, UBL4A and GET4/TRC35. Interacts with BAG6; the interaction is direct and required for UBL4A protein stability. Interacts with USP13; may be indirect via BAG6. In terms of processing, polyubiquitinated. Ubiquitination by AMFR and deubiquitination by USP13 may regulate the interaction between the BAG6/BAT3 complex and SGTA and therefore may regulate client proteins fate.

Its subcellular location is the cytoplasm. The protein localises to the cytosol. It localises to the nucleus. Its function is as follows. As part of a cytosolic protein quality control complex, the BAG6/BAT3 complex, maintains misfolded and hydrophobic patches-containing proteins in a soluble state and participates in their proper delivery to the endoplasmic reticulum or alternatively can promote their sorting to the proteasome where they undergo degradation. The BAG6/BAT3 complex is involved in the post-translational delivery of tail-anchored/type II transmembrane proteins to the endoplasmic reticulum membrane. Recruited to ribosomes, it interacts with the transmembrane region of newly synthesized tail-anchored proteins and together with SGTA and ASNA1 mediates their delivery to the endoplasmic reticulum. Client proteins that cannot be properly delivered to the endoplasmic reticulum are ubiquitinated and sorted to the proteasome. Similarly, the BAG6/BAT3 complex also functions as a sorting platform for proteins of the secretory pathway that are mislocalized to the cytosol either delivering them to the proteasome for degradation or to the endoplasmic reticulum. The BAG6/BAT3 complex also plays a role in the endoplasmic reticulum-associated degradation (ERAD), a quality control mechanism that eliminates unwanted proteins of the endoplasmic reticulum through their retrotranslocation to the cytosol and their targeting to the proteasome. It maintains these retrotranslocated proteins in an unfolded yet soluble state condition in the cytosol to ensure their proper delivery to the proteasome. This Mus musculus (Mouse) protein is Ubiquitin-like protein 4A.